The primary structure comprises 233 residues: Putative N-acetylmannosamine-6-phosphate 2-epimerase (233 aa).

It belongs to the NanE family.

It carries out the reaction an N-acyl-D-glucosamine 6-phosphate = an N-acyl-D-mannosamine 6-phosphate. The protein operates within amino-sugar metabolism; N-acetylneuraminate degradation; D-fructose 6-phosphate from N-acetylneuraminate: step 3/5. In terms of biological role, converts N-acetylmannosamine-6-phosphate (ManNAc-6-P) to N-acetylglucosamine-6-phosphate (GlcNAc-6-P). This chain is Putative N-acetylmannosamine-6-phosphate 2-epimerase, found in Yersinia pseudotuberculosis serotype O:3 (strain YPIII).